Reading from the N-terminus, the 209-residue chain is MASKYPEEGPITEGVEEDFNSHSTSGLDLTSGNKEEPLISLALLSMHTSKIVVWIRDHFFVKILSFGGKQKLYYICNQCHKGIPESGYITLNTKYYLYEKGPTETGTKGLTLMRRHVQNSPCFLNSRKESGTPKTDPTRPATSYSLCRSDYQEAGCSRPTPSNSESVCNGLGQPSERGHTSGESGGIMEEVSFISWLEGLWGEGFDYAN.

Disordered regions lie at residues 1-30 (MASK…LDLT), 123-143 (FLNS…PATS), and 156-185 (CSRP…GESG). Composition is skewed to polar residues over residues 21 to 30 (SHSTSGLDLT) and 132 to 143 (TPKTDPTRPATS).

Functionally, transcriptional transactivator that activates the viral internal promoter (IP), thereby enhancing its own expression. This transactivation is repressed by nuclear factor I. Also transactivates the long terminal repeat (LTR) promoter, thereby inducing structural gene expression, initiating the late phase of infection. It is therefore a key regulator of viral gene expression. It directly binds to and activates DNA target sites of viral promoters and those of distinct cellular genes. Required for viral replication. In Felis catus (Cat), this protein is Protein Bel-1 (bel1).